The following is a 98-amino-acid chain: MPSTFFNLTMAFSLSLLGTLMFRSHLMSTLLCLEGMVLSLFIMTSVTSLNSNSMSSMPIPITILVFAACEAAVGLALLVKVSNTYGTDYVQNLNLLQC.

3 helical membrane passes run 2–22 (PSTFFNLTMAFSLSLLGTLMF), 26–46 (LMSTLLCLEGMVLSLFIMTSV), and 58–79 (PIPITILVFAACEAAVGLALLV).

The protein belongs to the complex I subunit 4L family. Core subunit of respiratory chain NADH dehydrogenase (Complex I) which is composed of 45 different subunits.

The protein localises to the mitochondrion inner membrane. It carries out the reaction a ubiquinone + NADH + 5 H(+)(in) = a ubiquinol + NAD(+) + 4 H(+)(out). Core subunit of the mitochondrial membrane respiratory chain NADH dehydrogenase (Complex I) which catalyzes electron transfer from NADH through the respiratory chain, using ubiquinone as an electron acceptor. Part of the enzyme membrane arm which is embedded in the lipid bilayer and involved in proton translocation. The chain is NADH-ubiquinone oxidoreductase chain 4L from Mus musculus (Mouse).